The primary structure comprises 242 residues: Venom nerve growth factor 3 (242 aa).

The signal sequence occupies residues 1–18 (MSMLCYTLIIAFLIGIWA). A propeptide spanning residues 19–125 (APKSEDNVPL…ALNRNIRSKR (107 aa)) is cleaved from the precursor. A compositionally biased stretch (basic and acidic residues) spans 48–66 (LKTSRNTDQRHPAPKKAED). Residues 48 to 69 (LKTSRNTDQRHPAPKKAEDQEL) are disordered. 3 disulfide bridges follow: cysteine 139/cysteine 203, cysteine 181/cysteine 231, and cysteine 191/cysteine 233. A glycan (N-linked (GlcNAc...) asparagine) is linked at asparagine 147.

It belongs to the NGF-beta family. Homodimer; non-covalently linked. As to expression, expressed by the venom gland.

The protein localises to the secreted. In terms of biological role, nerve growth factor is important for the development and maintenance of the sympathetic and sensory nervous systems. It stimulates division and differentiation of sympathetic and embryonic sensory neurons as well as basal forebrain cholinergic neurons in the brain. Its relevance in the snake venom is not clear. However, it has been shown to inhibit metalloproteinase-dependent proteolysis of platelet glycoprotein Ib alpha, suggesting a metalloproteinase inhibition to prevent metalloprotease autodigestion and/or protection against prey proteases. Binds a lipid between the two protein chains in the homodimer. The lipid-bound form promotes histamine relase from mouse mast cells, contrary to the lipid-free form. The protein is Venom nerve growth factor 3 of Demansia vestigiata (Lesser black whip snake).